Reading from the N-terminus, the 320-residue chain is Glutathione synthetase (320 aa).

The 186-residue stretch at 127–312 (KLAITEFPRF…VAGLMIDALE (186 aa)) folds into the ATP-grasp domain. 153–209 (LAEHEDIILKPLDGMGGAGIFRIQNTDHNIGVIIETLTRYGTRTIMAQRFLPEIREG) contacts ATP. The Mg(2+) site is built by Glu283 and Asn285.

Belongs to the prokaryotic GSH synthase family. It depends on Mg(2+) as a cofactor. Mn(2+) serves as cofactor.

It catalyses the reaction gamma-L-glutamyl-L-cysteine + glycine + ATP = glutathione + ADP + phosphate + H(+). It functions in the pathway sulfur metabolism; glutathione biosynthesis; glutathione from L-cysteine and L-glutamate: step 2/2. The protein is Glutathione synthetase of Nitrosomonas europaea (strain ATCC 19718 / CIP 103999 / KCTC 2705 / NBRC 14298).